The sequence spans 542 residues: Chaperonin GroEL 2 (542 aa).

ATP-binding positions include 30–33, K51, 87–91, G415, and D496; these read TLGP and DGTTT.

The protein belongs to the chaperonin (HSP60) family. As to quaternary structure, forms a cylinder of 14 subunits composed of two heptameric rings stacked back-to-back. Interacts with the co-chaperonin GroES.

The protein resides in the cytoplasm. The enzyme catalyses ATP + H2O + a folded polypeptide = ADP + phosphate + an unfolded polypeptide.. In terms of biological role, together with its co-chaperonin GroES, plays an essential role in assisting protein folding. The GroEL-GroES system forms a nano-cage that allows encapsulation of the non-native substrate proteins and provides a physical environment optimized to promote and accelerate protein folding. This chain is Chaperonin GroEL 2, found in Rhizobium etli (strain ATCC 51251 / DSM 11541 / JCM 21823 / NBRC 15573 / CFN 42).